Reading from the N-terminus, the 281-residue chain is 3'-5' exonuclease Snipper (281 aa).

The segment at 19-52 (DGARPDPNNDPEESFNEDEVTEANSVPAKSKKSR) is disordered. The segment covering 27–39 (NDPEESFNEDEVT) has biased composition (acidic residues). Residues 64–262 (YVIAVDFEAT…MCKMVRDGAL (199 aa)) enclose the Exonuclease domain. Positions 69 and 71 each coordinate Mg(2+). E71 serves as the catalytic Proton acceptor. AMP contacts are provided by E71 and A72. D183 lines the Mg(2+) pocket. H240 acts as the Proton acceptor in catalysis. An AMP-binding site is contributed by H240. D245 is a Mg(2+) binding site.

It belongs to the ERI2 family. The cofactor is Mg(2+).

The protein localises to the cytoplasm. Its subcellular location is the nucleus. It is found in the nucleolus. In terms of biological role, a broad-specificity exonuclease, capable of degrading both structure-specific DNA and RNA targets without sequence specificity in vitro. Requires two to five unpaired nucleotides in the 3' region for efficient binding and nuclease activity. Binds with higher affinity to RNA and DNA stem-loop substrates compared to single-stranded substrate. Binds to the 3'-end of histone mRNAs and degrades them, suggesting that it might play a role in histone mRNA decay after replication. Can readily cleave the histone stem-loop RNA beyond the -12 (UUU) position in the loop to produce -14 and then -16 oligonucleotide fragments for both the stem-loop and the reverse stem-loop. Cleaves both the single-stranded 3' flank as well as the double-stranded stem portion of histone stem-loop RNA. Might affect histone mRNA 3' processing thereby regulating histone protein expression. Has an important role in development and tissue formation. Might have a role in 5.8S rRNA precursor processing. In Drosophila melanogaster (Fruit fly), this protein is 3'-5' exonuclease Snipper.